A 115-amino-acid chain; its full sequence is NADH-ubiquinone oxidoreductase chain 3 (115 aa).

The next 3 helical transmembrane spans lie at 3–23 (FVLA…ITFW), 55–75 (FFLV…LLPL), and 84–104 (LPLM…GLTY).

The protein belongs to the complex I subunit 3 family. In terms of assembly, core subunit of respiratory chain NADH dehydrogenase (Complex I) which is composed of 45 different subunits. Interacts with TMEM186. Interacts with TMEM242.

It is found in the mitochondrion inner membrane. The catalysed reaction is a ubiquinone + NADH + 5 H(+)(in) = a ubiquinol + NAD(+) + 4 H(+)(out). Core subunit of the mitochondrial membrane respiratory chain NADH dehydrogenase (Complex I) which catalyzes electron transfer from NADH through the respiratory chain, using ubiquinone as an electron acceptor. Essential for the catalytic activity of complex I. This Pongo abelii (Sumatran orangutan) protein is NADH-ubiquinone oxidoreductase chain 3.